The following is a 317-amino-acid chain: MTLDHQILNQSFKRSHPPTPSSELLVQHGHPSPESDTGLTGNPLTRLLTLGKEDDNTEWHVSGSILDVYSGEQEISPVNMGLTSASCPSSLPMKREITETDTRALAKERQKKDNHNLIERRRRYNINYRIKELGTLIPKSNDPDMRWNKGTILKASVEYIKWLQKEQQRAQELEHRQKKLEQANRRLLLRIQELEIQARAHGLPTLASLVTVDLGAHITKQTHLEQNSGDYCQQLVLSQGTSPELCDQAMAFSDPLSHFTDLSFSAALKEEQRLDNMLLDDTVSPFGTDPLLSAISPAVSKESSRRSSFSSEDGDEL.

A disordered region spans residues 1-44 (MTLDHQILNQSFKRSHPPTPSSELLVQHGHPSPESDTGLTGNPL). Positions 1-90 (MTLDHQILNQ…GLTSASCPSS (90 aa)) are necessary for transcriptional transactivation. A compositionally biased stretch (polar residues) spans 34–43 (ESDTGLTGNP). Residues 110-163 (QKKDNHNLIERRRRYNINYRIKELGTLIPKSNDPDMRWNKGTILKASVEYIKWL) enclose the bHLH domain. The necessary for transcriptional transactivation stretch occupies residues 241–317 (TSPELCDQAM…SFSSEDGDEL (77 aa)). The interval 297 to 317 (PAVSKESSRRSSFSSEDGDEL) is disordered.

This sequence belongs to the MiT/TFE family. As to quaternary structure, homodimer. Forms heterodimers with MITF and TFE3. Interacts with MITF.

The protein resides in the nucleus. Its function is as follows. Transcriptional regulator that acts as a repressor or an activator. Acts as a transcriptional repressor on minimal promoter containing element F (that includes an E-box sequence). Binds to element F in an E-box sequence-specific manner. Acts as a transcriptional transactivator on the proximal promoter region of the tartrate-resistant acid phosphatase (TRAP) E-box containing promoter. Collaborates with MITF in target gene activation. Acts as a transcriptional repressor on minimal promoter containing mu E3 enhancer sequence. Binds to mu E3 DNA sequence of the immunoglobulin heavy-chain gene enhancer. Binds DNA in a homo- or heterodimeric form. The polypeptide is Transcription factor EC (TFEC) (Bos taurus (Bovine)).